The sequence spans 85 residues: MATPLSPFSWLAIGIVKLYQWFISPLIGPRCRFTPTCSTYAIEALRAHGFIKGCWLSTKRLLKCHPLNEGGFDPVPPVQKQDRDK.

The protein belongs to the UPF0161 family.

It is found in the cell inner membrane. Could be involved in insertion of integral membrane proteins into the membrane. This Vibrio cholerae serotype O1 (strain ATCC 39315 / El Tor Inaba N16961) protein is Putative membrane protein insertion efficiency factor.